The sequence spans 237 residues: Demethylmenaquinone methyltransferase (237 aa).

S-adenosyl-L-methionine is bound by residues threonine 58, aspartate 79, and 106-107 (NA).

The protein belongs to the class I-like SAM-binding methyltransferase superfamily. MenG/UbiE family.

The catalysed reaction is a 2-demethylmenaquinol + S-adenosyl-L-methionine = a menaquinol + S-adenosyl-L-homocysteine + H(+). Its pathway is quinol/quinone metabolism; menaquinone biosynthesis; menaquinol from 1,4-dihydroxy-2-naphthoate: step 2/2. In terms of biological role, methyltransferase required for the conversion of demethylmenaquinol (DMKH2) to menaquinol (MKH2). In Listeria monocytogenes serotype 4a (strain HCC23), this protein is Demethylmenaquinone methyltransferase.